Here is a 326-residue protein sequence, read N- to C-terminus: Probable cell division protein WhiA (326 aa).

A DNA-binding region (H-T-H motif) is located at residues 275 to 308; that stretch reads SLDELGRLADPPMTKDAIAGRIRRLLAMADKRAL.

It belongs to the WhiA family.

In terms of biological role, involved in cell division and chromosome segregation. The protein is Probable cell division protein WhiA of Paenarthrobacter aurescens (strain TC1).